A 494-amino-acid chain; its full sequence is MKNEKLKVDNHIHNNIQFIDCLEFWVSNAKSFIKSFLQPMNFEVIGTRFNDERSRIQYLLLNNVISRSNLQNQFQIENNSYIKPIQGNQFIKVTSSISPNDLDFHSKIQKHGDFIQNISFYCNDINLAYNKSINNGAKSVQLPMKEYFKNCKDIVETAIIESPFKDLQHTFINRNITSFDDNNNNNYDNNKEIFGNPLFLYPEFQEIKDKELFKIEKEDSSSINGCTGSLDHIATCIKNGEMNYFVEWYRKCLGFKLLSDKDSVATDESENFENELILDKNFYVITKSDFKYTKKENIGLKMAVLSNQPLNTSFHKTPPIQFVISEAIQGGEGQIEQFIHYFGGEGVQHLAFNSNNIFKAVEIAKSQKLEFVYIPQSYYSKLDERLKHLFPNSIPKILKENLMKFGILIDSDAITNTNENNSNNNNNNDSQNNTEINQNIGYIKQIFTKYINDRPTMFFELIERSNALGFGKGNIIALFESLEKESSGSQLKSD.

VOC domains lie at 18-174 and 229-408; these read FIDC…FINR and SLDH…FGIL. The Fe cation site is built by histidine 232, histidine 349, and glutamate 460.

It belongs to the 4HPPD family. Fe cation is required as a cofactor.

May have dioxygenase activity. This is an uncharacterized protein from Dictyostelium discoideum (Social amoeba).